An 82-amino-acid polypeptide reads, in one-letter code: U-scoloptoxin(21)-Sm3a (82 aa).

Residues 1 to 21 (MKIIALLLMVFLDFIIVNXAE) form the signal peptide.

It belongs to the scoloptoxin-21 family. As to expression, expressed by the venom gland.

The protein localises to the secreted. This Scolopendra morsitans (Tanzanian blue ringleg centipede) protein is U-scoloptoxin(21)-Sm3a.